Consider the following 420-residue polypeptide: Ribosome biogenesis protein WDR12 homolog (420 aa).

The ubiquitin-like (UBL) domain stretch occupies residues 10-92; that stretch reads VQVHLKTKQE…EDAIEIEYVE (83 aa). WD repeat units lie at residues 104–142, 143–185, 192–231, 250–288, 290–329, 335–375, and 379–417; these read LHDDWVSAVKARGKWILSGCYDNSLNLWTNKGKHILTIS, GHTA…NAVD, GHERGVDSVSVSPDGLRFATGSWDTMLKVWSAELDDGVEG, GHRESVSAVQWMDATTLLTGSWDYTLKVWDLSLEGIKTE, STNKSIFDASYSKLNRLILTASADKNLRLYDPRTNQGSVV, GHNA…APLY, and GHGDKVLDIDWSNPKYIVSGGVDNTVRVFKSRKALAEDT.

Belongs to the WD repeat WDR12/YTM1 family.

The protein resides in the nucleus. Its subcellular location is the nucleolus. It localises to the nucleoplasm. Functionally, required for maturation of ribosomal RNAs and formation of the large ribosomal subunit. The sequence is that of Ribosome biogenesis protein WDR12 homolog from Drosophila sechellia (Fruit fly).